The sequence spans 365 residues: Succinyl-diaminopimelate desuccinylase (365 aa).

His-64 contributes to the Zn(2+) binding site. Asp-66 is a catalytic residue. Position 95 (Asp-95) interacts with Zn(2+). Glu-125 (proton acceptor) is an active-site residue. Zn(2+) contacts are provided by Glu-126, Glu-154, and His-339.

It belongs to the peptidase M20A family. DapE subfamily. Homodimer. The cofactor is Zn(2+). Co(2+) is required as a cofactor.

The enzyme catalyses N-succinyl-(2S,6S)-2,6-diaminopimelate + H2O = (2S,6S)-2,6-diaminopimelate + succinate. Its pathway is amino-acid biosynthesis; L-lysine biosynthesis via DAP pathway; LL-2,6-diaminopimelate from (S)-tetrahydrodipicolinate (succinylase route): step 3/3. Functionally, catalyzes the hydrolysis of N-succinyl-L,L-diaminopimelic acid (SDAP), forming succinate and LL-2,6-diaminopimelate (DAP), an intermediate involved in the bacterial biosynthesis of lysine and meso-diaminopimelic acid, an essential component of bacterial cell walls. This is Succinyl-diaminopimelate desuccinylase from Campylobacter fetus subsp. fetus (strain 82-40).